The chain runs to 141 residues: VLSAADKTNVKGIFAKIGGHGDDYGAETLDRMFTVYPQTKTYFPHFDVSHGSAQIKAHGKKVVAALVEAVNHIDDIAGALSKLSDLHAHKLRVDPANFKLLGQCFLVVVGIHHASALTPEVHASLDKFLCAVSTVLTAKYR.

Residues 1-141 (VLSAADKTNV…VSTVLTAKYR (141 aa)) form the Globin domain. An O2-binding site is contributed by His58. Residue His87 participates in heme b binding.

The protein belongs to the globin family. Heterotetramer of two alpha chains and two beta chains. As to expression, red blood cells.

In terms of biological role, involved in oxygen transport from the lung to the various peripheral tissues. The polypeptide is Hemoglobin subunit alpha-A (HBAA) (Eudynamys scolopaceus (Western koel)).